We begin with the raw amino-acid sequence, 433 residues long: Voltage-gated potassium channel regulatory subunit KCNG3 (433 aa).

The Cytoplasmic portion of the chain corresponds to 1–165 (MTFGRGGAAS…RTFEEPTSSL (165 aa)). A helical membrane pass occupies residues 166-187 (AAQILASVSVVFVIVSMVVLCA). At 188 to 217 (STLPDWRAAVADNRSLDDRSRYSASPGREP) the chain is on the extracellular side. The helical transmembrane segment at 218–239 (SGIIEAICIGWFTAECIVRFIV) threads the bilayer. At 240 to 250 (SKNKCEFVKRP) the chain is on the cytoplasmic side. Residues 251 to 271 (LNIIDLLAITPYYISVLMTVF) traverse the membrane as a helical segment. At 272–281 (TGENSQLQRA) the chain is on the extracellular side. Residues 282–302 (GVTLRVLRMMRIFWVIKLARH) traverse the membrane as a helical; Voltage-sensor segment. The Cytoplasmic portion of the chain corresponds to 303–317 (FIGLQTLGLTLKRCY). Residues 318 to 339 (REMAMLLVFICVAMAIFSALSQ) form a helical membrane-spanning segment. Topologically, residues 340-357 (LLEHGLDLETSNKDFASI) are extracellular. Positions 358–369 (PAACWWVIISMT) form an intramembrane region, helical. The Selectivity filter motif lies at 370-375 (TVGYGD). The stretch at 370–377 (TVGYGDMY) is an intramembrane region. The Extracellular portion of the chain corresponds to 378-384 (PITVPGR). A helical transmembrane segment spans residues 385-413 (ILGGVCVVSGIVLLALPITFIYHSFVQCY). Topologically, residues 414-433 (HELKFRSARYSRSLSAEFLN) are cytoplasmic.

Belongs to the potassium channel family. G (TC 1.A.1.2) subfamily. Kv6.3/KCNG3 sub-subfamily. Heterotetramer with KCNB1. Does not form homomultimers.

Its subcellular location is the cell membrane. The protein resides in the cytoplasm. Regulatory subunit of the voltage-gated potassium (Kv) channel which, when coassembled with KCNB1, modulates the kinetics parameters of the heterotetrameric channel namely the inactivation and deactivation rate. Potassium channel subunit that does not form functional channels by itself. Reduces the deactivation rate. Moderately acceleratee activation. This chain is Voltage-gated potassium channel regulatory subunit KCNG3, found in Mus musculus (Mouse).